A 382-amino-acid polypeptide reads, in one-letter code: Glutamine synthetase cytosolic isozyme (382 aa).

The GS beta-grasp domain occupies Gly-36–Lys-118. The GS catalytic domain maps to Thr-135–Leu-382.

Belongs to the glutamine synthetase family. Homooctamer.

The protein resides in the cytoplasm. The enzyme catalyses L-glutamate + NH4(+) + ATP = L-glutamine + ADP + phosphate + H(+). In Chlamydomonas reinhardtii (Chlamydomonas smithii), this protein is Glutamine synthetase cytosolic isozyme (GLN1).